The chain runs to 194 residues: dTTP/UTP pyrophosphatase (194 aa).

The active-site Proton acceptor is the D69.

Belongs to the Maf family. YhdE subfamily. A divalent metal cation serves as cofactor.

Its subcellular location is the cytoplasm. The enzyme catalyses dTTP + H2O = dTMP + diphosphate + H(+). It carries out the reaction UTP + H2O = UMP + diphosphate + H(+). Functionally, nucleoside triphosphate pyrophosphatase that hydrolyzes dTTP and UTP. May have a dual role in cell division arrest and in preventing the incorporation of modified nucleotides into cellular nucleic acids. The polypeptide is dTTP/UTP pyrophosphatase (Moorella thermoacetica (strain ATCC 39073 / JCM 9320)).